Reading from the N-terminus, the 295-residue chain is ESX-3 secretion-associated protein EspG3 (295 aa).

It belongs to the EspG family. In terms of assembly, interacts specifically with ESX-3-dependent PE/PPE proteins.

The protein resides in the cytoplasm. Its function is as follows. Specific chaperone for cognate PE/PPE proteins. Plays an important role in preventing aggregation of PE/PPE dimers. The protein is ESX-3 secretion-associated protein EspG3 of Mycobacterium tuberculosis (strain CDC 1551 / Oshkosh).